The following is a 398-amino-acid chain: Bombesin receptor subtype-3 (398 aa).

Over 1 to 40 (MAQRQPHSPNQTLISITNDTESSSVVSNDNTNKGRSGDNS) the chain is Extracellular. 2 N-linked (GlcNAc...) asparagine glycosylation sites follow: asparagine 10 and asparagine 18. Residues 41–62 (PGIEALCAIYITYAVIISVGIL) traverse the membrane as a helical segment. Over 63-81 (GNAILIKVFFKTKSMQTVP) the chain is Cytoplasmic. A helical membrane pass occupies residues 82-102 (NIFITSLAFGDLLLLLTCVPV). Topologically, residues 103 to 120 (DATHYLAEGWLFGRIGCK) are extracellular. Cysteine 119 and cysteine 202 are joined by a disulfide. Residues 121–142 (VLSFIRLTSVGVSVFTLTILSA) traverse the membrane as a helical segment. The Cytoplasmic portion of the chain corresponds to 143 to 162 (DRYKAVVKPLERQPSNAILK). A helical membrane pass occupies residues 163 to 183 (TCIKAGCVWIVSMIFALPEAI). Residues 184–219 (FSNVYSFRDPNKNVTFESCTSYPVSKKLLQEIHSLL) are Extracellular-facing. A helical membrane pass occupies residues 220–240 (CFLVFYIIPLSIISVYYSLIA). Residues 241–271 (RTLYKSTLNIPTEEQGHARKQIESRKRIART) lie on the Cytoplasmic side of the membrane. The chain crosses the membrane as a helical span at residues 272–292 (VLVLVALFALCWLPNHLLYLY). Topologically, residues 293 to 312 (HSFTSQTYVDPSAMHFIFTI) are extracellular. The chain crosses the membrane as a helical span at residues 313–332 (FSRVLAFSNSCVNPFALYWL). The Cytoplasmic portion of the chain corresponds to 333 to 398 (SKTFQKHFKA…CSVKQAEDRV (66 aa)). Cysteine 346 is lipidated: S-palmitoyl cysteine.

It belongs to the G-protein coupled receptor 1 family. As to quaternary structure, interacts with C6orf89.

It localises to the cell membrane. In terms of biological role, role in sperm cell division, maturation, or function. This receptor mediates its action by association with G proteins that activate a phosphatidylinositol-calcium second messenger system. The polypeptide is Bombesin receptor subtype-3 (BRS3) (Macaca mulatta (Rhesus macaque)).